The sequence spans 288 residues: NAD kinase (288 aa).

Asp68 functions as the Proton acceptor in the catalytic mechanism. NAD(+) is bound by residues 68–69 (DG), 142–143 (ND), Arg153, Asp172, and Gln242.

Belongs to the NAD kinase family. Requires a divalent metal cation as cofactor.

The protein localises to the cytoplasm. The catalysed reaction is NAD(+) + ATP = ADP + NADP(+) + H(+). Functionally, involved in the regulation of the intracellular balance of NAD and NADP, and is a key enzyme in the biosynthesis of NADP. Catalyzes specifically the phosphorylation on 2'-hydroxyl of the adenosine moiety of NAD to yield NADP. In Desulforamulus reducens (strain ATCC BAA-1160 / DSM 100696 / MI-1) (Desulfotomaculum reducens), this protein is NAD kinase.